The following is a 188-amino-acid chain: Putative 3-methyladenine DNA glycosylase (188 aa).

Belongs to the DNA glycosylase MPG family.

The sequence is that of Putative 3-methyladenine DNA glycosylase from Ehrlichia ruminantium (strain Gardel).